A 458-amino-acid polypeptide reads, in one-letter code: UDP-N-acetylmuramoylalanine--D-glutamate ligase (458 aa).

An ATP-binding site is contributed by 124–130 (GSDGKTT).

This sequence belongs to the MurCDEF family.

The protein resides in the cytoplasm. It carries out the reaction UDP-N-acetyl-alpha-D-muramoyl-L-alanine + D-glutamate + ATP = UDP-N-acetyl-alpha-D-muramoyl-L-alanyl-D-glutamate + ADP + phosphate + H(+). The protein operates within cell wall biogenesis; peptidoglycan biosynthesis. Functionally, cell wall formation. Catalyzes the addition of glutamate to the nucleotide precursor UDP-N-acetylmuramoyl-L-alanine (UMA). The chain is UDP-N-acetylmuramoylalanine--D-glutamate ligase from Clostridium beijerinckii (strain ATCC 51743 / NCIMB 8052) (Clostridium acetobutylicum).